An 827-amino-acid chain; its full sequence is Leucine--tRNA ligase (827 aa).

The short motif at 42-52 (PYPSGKLHMGH) is the 'HIGH' region element. Residues 583 to 587 (KMSKS) carry the 'KMSKS' region motif. Lys586 provides a ligand contact to ATP.

Belongs to the class-I aminoacyl-tRNA synthetase family.

The protein resides in the cytoplasm. It carries out the reaction tRNA(Leu) + L-leucine + ATP = L-leucyl-tRNA(Leu) + AMP + diphosphate. The chain is Leucine--tRNA ligase from Pelotomaculum thermopropionicum (strain DSM 13744 / JCM 10971 / SI).